Consider the following 1159-residue polypeptide: WASH complex subunit 5 (1159 aa).

It belongs to the strumpellin family. Component of the WASH core complex also described as WASH regulatory complex (SHRC) composed of WASH (WASHC1, WASH2P or WASH3P), WASHC2 (WASHC2A or WASHC2C), WASHC3, WASHC4 and WASHC5. The WASH core complex associates via WASHC2 with the F-actin-capping protein dimer (formed by CAPZA1, CAPZA2 or CAPZA3 and CAPZB) in a transient or substoichiometric manner which was initially described as WASH complex. Interacts with VCP, PI4K2A.

The protein resides in the cytoplasm. The protein localises to the cytosol. It localises to the endoplasmic reticulum. It is found in the early endosome. In terms of biological role, acts as a component of the WASH core complex that functions as a nucleation-promoting factor (NPF) at the surface of endosomes, where it recruits and activates the Arp2/3 complex to induce actin polymerization, playing a key role in the fission of tubules that serve as transport intermediates during endosome sorting. May be involved in axonal outgrowth. Involved in cellular localization of ADRB2. Involved in cellular trafficking of BLOC-1 complex cargos such as ATP7A and VAMP7. Involved in cytokinesis and following polar body extrusion during oocyte meiotic maturation. In Mus musculus (Mouse), this protein is WASH complex subunit 5.